The sequence spans 336 residues: Foldase protein PrsA (336 aa).

Positions 1–22 are cleaved as a signal peptide; the sequence is MKSAKKLLSVLCLGIFILTFTA. C23 carries the N-palmitoyl cysteine lipid modification. A lipid anchor (S-diacylglycerol cysteine) is attached at C23. Residues 194 to 286 enclose the PpiC domain; it reads PNTMNVSHIL…FGYHIIKINS (93 aa).

This sequence belongs to the PrsA family.

Its subcellular location is the cell membrane. It carries out the reaction [protein]-peptidylproline (omega=180) = [protein]-peptidylproline (omega=0). In terms of biological role, plays a major role in protein secretion by helping the post-translocational extracellular folding of several secreted proteins. This chain is Foldase protein PrsA, found in Clostridium botulinum (strain 657 / Type Ba4).